A 200-amino-acid chain; its full sequence is Prophage tail fiber assembly protein homolog TfaE (200 aa).

The protein belongs to the tfa family.

This is Prophage tail fiber assembly protein homolog TfaE (tfaE) from Escherichia coli (strain K12).